The following is a 463-amino-acid chain: Lipase 5 (463 aa).

A signal peptide spans 1–14 (MLYLILFLIAPIYA). Cysteines 110 and 281 form a disulfide. Ser194 acts as the Charge relay system in catalysis. N-linked (GlcNAc...) asparagine glycosylation is present at Asn229. Active-site charge relay system residues include Asp343 and His376. A disulfide bond links Cys359 and Cys404.

Belongs to the AB hydrolase superfamily. Lipase family. Class Lip subfamily.

The protein resides in the secreted. The catalysed reaction is a triacylglycerol + H2O = a diacylglycerol + a fatty acid + H(+). Its activity is regulated as follows. Fe(2)+, Fe(3+), Hg(2+) as well as ethylenediaminetetraacetic acid (EDTA) and phenylmethanesulfonyl fluoride (PMSF) strongly inhibit the lipase activity. Surfactants such as Tween 20, Tween 80 and TritonX-100 show also inhibitory effect in the lipase activity. Sodium dodecyl sulfate (SDS) sharply decreases the lipase activity by 85%. Methanol, ethanol, and acetone have also negative effect on the lipase activity, with residual activities at 48%, 24% and 44% respectively. Finally, lipase activity is almost lost in the presence of isopropanol alcohol. Its function is as follows. Secreted lipase that is able to hydrolyze both the neutral triacylglycerols and the monopalmitate ester Tween 40, allowing the use of hydrolyzed products as carbon sources. Exhibits a preference for the short and medium chain length p-NP (C4 and C8 acyl group) esters rather than the long chain length p-NP esters (C12, C16 and C18 acyl group). Has broad lipolytic activity, which may be important for colonization and subsequent infection, therefore contributing to the persistence and virulence in human tissue. The chain is Lipase 5 from Candida albicans (strain SC5314 / ATCC MYA-2876) (Yeast).